Consider the following 732-residue polypeptide: Non-structural protein 4 (732 aa).

Polar residues-rich tracts occupy residues 13 to 23 (KNKGIQQNQWH) and 31 to 56 (LSGQTKAEQGTSSQQAGVNQGENSKS). Disordered regions lie at residues 13–74 (KNKG…NSAA) and 706–732 (LGRNAGPSKSWADQVEEAENEEEKQKE). A compositionally biased stretch (acidic residues) spans 719 to 732 (QVEEAENEEEKQKE).

This Catharanthus roseus (Madagascar periwinkle) protein is Non-structural protein 4.